The chain runs to 213 residues: UPF0502 protein Daro_2469 (213 aa).

Belongs to the UPF0502 family.

The protein is UPF0502 protein Daro_2469 of Dechloromonas aromatica (strain RCB).